The chain runs to 358 residues: Ubiquitin thioesterase OTU1 (358 aa).

The 83-residue stretch at 5–87 (FSVKLKSKKG…LIVEEKAGAA (83 aa)) folds into the Ubiquitin-like domain. Residues 8–94 (KLKSKKGQFI…GAAGPTSTPL (87 aa)) are UBX-like. The tract at residues 83-108 (KAGAAGPTSTPLASGSGSSTMEDDEA) is disordered. Polar residues predominate over residues 89–102 (PTSTPLASGSGSST). An OTU domain is found at 161–285 (LLKKVVPADN…GIHYDPLYME (125 aa)). Positions 166–172 (VPADNSC) are cys-loop. The active site involves Asp169. The Nucleophile role is filled by Cys172. The interval 224 to 234 (IQKADSWGGAI) is variable-loop. A his-loop region spans residues 274 to 278 (FDGIH). A substrate-binding site is contributed by Ile277. Residue His278 is part of the active site. The segment at 301–306 (MGVYQQ) is S2 site. A C2H2-type zinc finger spans residues 328 to 352 (LRCMDCDVMLVGQGQAQEHAKKTGH). His352 is a catalytic residue.

It carries out the reaction Thiol-dependent hydrolysis of ester, thioester, amide, peptide and isopeptide bonds formed by the C-terminal Gly of ubiquitin (a 76-residue protein attached to proteins as an intracellular targeting signal).. Its function is as follows. Hydrolase that can remove conjugated ubiquitin from proteins and may therefore play an important regulatory role at the level of protein turnover by preventing degradation. The chain is Ubiquitin thioesterase OTU1 from Drosophila pseudoobscura pseudoobscura (Fruit fly).